Here is a 402-residue protein sequence, read N- to C-terminus: Sex hormone-binding globulin (402 aa).

The first 29 residues, 1 to 29 (MESRGPLATSRLLLLLLLLLLRHTRQGWA), serve as a signal peptide directing secretion. The O-linked (GalNAc...) threonine glycan is linked to Thr36. 2 Laminin G-like domains span residues 45 to 217 (VHLS…LRSC) and 224 to 390 (GIFL…THSC). 2 cysteine pairs are disulfide-bonded: Cys193-Cys217 and Cys362-Cys390. 2 N-linked (GlcNAc...) asparagine glycosylation sites follow: Asn380 and Asn396.

As to quaternary structure, homodimer. Variant Asn-356 contains one N-linked (GlcNAc...) at position 356. As to expression, isoform 1 and isoform 2 are present in liver and testis.

It is found in the secreted. Its function is as follows. Functions as an androgen transport protein, but may also be involved in receptor mediated processes. Each dimer binds one molecule of steroid. Specific for 5-alpha-dihydrotestosterone, testosterone, and 17-beta-estradiol. Regulates the plasma metabolic clearance rate of steroid hormones by controlling their plasma concentration. The polypeptide is Sex hormone-binding globulin (Homo sapiens (Human)).